The sequence spans 110 residues: DNA-binding protein Mhun_3016 (110 aa).

It belongs to the PDCD5 family.

In Methanospirillum hungatei JF-1 (strain ATCC 27890 / DSM 864 / NBRC 100397 / JF-1), this protein is DNA-binding protein Mhun_3016.